Here is a 281-residue protein sequence, read N- to C-terminus: Probable endonuclease 4 (281 aa).

Residues histidine 69, histidine 109, glutamate 145, aspartate 179, histidine 182, histidine 216, aspartate 229, histidine 231, and glutamate 261 each contribute to the Zn(2+) site.

The protein belongs to the AP endonuclease 2 family. The cofactor is Zn(2+).

The enzyme catalyses Endonucleolytic cleavage to 5'-phosphooligonucleotide end-products.. Endonuclease IV plays a role in DNA repair. It cleaves phosphodiester bonds at apurinic or apyrimidinic (AP) sites, generating a 3'-hydroxyl group and a 5'-terminal sugar phosphate. This is Probable endonuclease 4 from Pectobacterium carotovorum subsp. carotovorum (strain PC1).